We begin with the raw amino-acid sequence, 247 residues long: UPF0659 protein C216.03 (247 aa).

The protein belongs to the UPF0659 family.

It localises to the cytoplasm. Its subcellular location is the nucleus. The chain is UPF0659 protein C216.03 from Schizosaccharomyces pombe (strain 972 / ATCC 24843) (Fission yeast).